The chain runs to 380 residues: Cytochrome b (380 aa).

A run of 4 helical transmembrane segments spans residues 34–54 (FGSL…LLAA), 78–99 (WLIR…YLHI), 114–134 (WNTG…GYVL), and 179–199 (FFTL…IHLT). Heme b contacts are provided by His84 and His98. Positions 183 and 197 each coordinate heme b. A ubiquinone is bound at residue His202. A run of 4 helical transmembrane segments spans residues 227 to 247 (LKDI…ALFS), 289 to 309 (LGGV…PLLH), 321 to 341 (LSQL…WVGS), and 348 to 368 (FMII…VLFP).

This sequence belongs to the cytochrome b family. The cytochrome bc1 complex contains 11 subunits: 3 respiratory subunits (MT-CYB, CYC1 and UQCRFS1), 2 core proteins (UQCRC1 and UQCRC2) and 6 low-molecular weight proteins (UQCRH/QCR6, UQCRB/QCR7, UQCRQ/QCR8, UQCR10/QCR9, UQCR11/QCR10 and a cleavage product of UQCRFS1). This cytochrome bc1 complex then forms a dimer. Heme b is required as a cofactor.

Its subcellular location is the mitochondrion inner membrane. Functionally, component of the ubiquinol-cytochrome c reductase complex (complex III or cytochrome b-c1 complex) that is part of the mitochondrial respiratory chain. The b-c1 complex mediates electron transfer from ubiquinol to cytochrome c. Contributes to the generation of a proton gradient across the mitochondrial membrane that is then used for ATP synthesis. In Anthropoides virgo (Demoiselle crane), this protein is Cytochrome b (MT-CYB).